The following is a 277-amino-acid chain: MVSVEDLHGLSAGQASVPDCKLFPQSPSAATRIAVLLAAALAGAAGGVALASAAGPQPLWAVLGAAAVAGGLLSTWSPCGYSSISLLRPDGRGLRAVAGWLPTFAMHGAGYGLGALMLGGLLGGIGLIAGFSGFGSTALLVLGLVGLAYGAHQLDFLRVPYPQRRAQVPHDARQRFPKWVIGGLYGLSLGLDYLTYVQTPLLYMMTLAAVFTGNIAHAIAIVALFNLGRFLPVAVNALPIPDYRVQAWLARHQENAALADGAILTALGAGFTVLALI.

7 consecutive transmembrane segments (helical) span residues 33–53 (IAVLLAAALAGAAGGVALASA), 59–79 (LWAVLGAAAVAGGLLSTWSPC), 111–131 (YGLGALMLGGLLGGIGLIAGF), 132–152 (SGFGSTALLVLGLVGLAYGAH), 179–199 (WVIGGLYGLSLGLDYLTYVQT), 205–225 (MTLAAVFTGNIAHAIAIVALF), and 257–277 (ALADGAILTALGAGFTVLALI).

Its subcellular location is the cell membrane. It functions in the pathway one-carbon metabolism; methylamine degradation. The chain is Methylamine utilization protein MauF (mauF) from Paracoccus denitrificans.